We begin with the raw amino-acid sequence, 61 residues long: Photosystem II reaction center protein K (61 aa).

Positions 1–24 are excised as a propeptide; it reads MPNILSLTCICFNSVLCPTSFFFA. The chain crosses the membrane as a helical span at residues 32-52; the sequence is IFNPIVDVMPVIPVLFFLLAF.

The protein belongs to the PsbK family. In terms of assembly, PSII is composed of 1 copy each of membrane proteins PsbA, PsbB, PsbC, PsbD, PsbE, PsbF, PsbH, PsbI, PsbJ, PsbK, PsbL, PsbM, PsbT, PsbX, PsbY, PsbZ, Psb30/Ycf12, at least 3 peripheral proteins of the oxygen-evolving complex and a large number of cofactors. It forms dimeric complexes.

It localises to the plastid. Its subcellular location is the chloroplast thylakoid membrane. One of the components of the core complex of photosystem II (PSII). PSII is a light-driven water:plastoquinone oxidoreductase that uses light energy to abstract electrons from H(2)O, generating O(2) and a proton gradient subsequently used for ATP formation. It consists of a core antenna complex that captures photons, and an electron transfer chain that converts photonic excitation into a charge separation. In Sorghum bicolor (Sorghum), this protein is Photosystem II reaction center protein K.